The chain runs to 262 residues: Deaminated glutathione amidase (262 aa).

A CN hydrolase domain is found at 1 to 238; the sequence is MLVAAGQFAV…PALIMAEVTP (238 aa). Glu40 (proton acceptor) is an active-site residue. Lys110 (proton donor) is an active-site residue. The active-site Nucleophile is Cys147.

It belongs to the carbon-nitrogen hydrolase superfamily. NIT1/NIT2 family.

The catalysed reaction is N-(4-oxoglutaryl)-L-cysteinylglycine + H2O = L-cysteinylglycine + 2-oxoglutarate. Hydrolyzes deaminated glutathione (dGSH) to 2-oxoglutarate and L-cysteinylglycine, and no activity on glutathione or L-glutamine. May function as a metabolite repair enzyme. This Escherichia coli O157:H7 protein is Deaminated glutathione amidase (ybeM).